The following is a 512-amino-acid chain: Protein maph-9 (512 aa).

Disordered stretches follow at residues 24–103 (ISRK…DDDF), 168–386 (DLSE…KNEK), and 481–512 (GNRL…RPFR). Composition is skewed to low complexity over residues 30-39 (TTTTSSGSSG) and 78-95 (STLS…STAA). The segment covering 178 to 200 (TDHEDPSLTFRVDKELEQSESKK) has biased composition (basic and acidic residues). The segment covering 230–239 (PQTSANLSTK) has biased composition (polar residues). 2 stretches are compositionally biased toward basic and acidic residues: residues 260–302 (KPSD…RENS) and 310–386 (VQDH…KNEK). A coiled-coil region spans residues 267-429 (KEWLQKKERE…QLEESEKMTR (163 aa)). The segment covering 502-512 (PGTTTSLRPFR) has biased composition (polar residues).

Expressed in amphid and phasmid ciliated neurons.

It is found in the cell projection. Its subcellular location is the cilium. The protein resides in the cytoplasm. The protein localises to the cytoskeleton. It localises to the cilium axoneme. The protein is Protein maph-9 of Caenorhabditis elegans.